Consider the following 877-residue polypeptide: SRP-independent targeting protein 1 (877 aa).

Residues S309, S310, S311, S332, and S334 each carry the phosphoserine modification. Disordered regions lie at residues 369–414 (LRKQ…PSND), 446–521 (DDYT…DVLS), and 550–579 (KPFN…SNHF). A compositionally biased stretch (low complexity) spans 389–402 (RSQSYSSSNMSRSP). Positions 412 to 441 (SNDELVYDELNNQINEVQDRAKNEEIVLYN) form a coiled coil. The segment covering 447–462 (DYTKERGEQEQDRTSY) has biased composition (basic and acidic residues). Acidic residues predominate over residues 470-501 (YDDEEGGNEDNYDDDEDDDDDDDDDDESDDEG). Polar residues-rich tracts occupy residues 510–521 (LSRSGSSTDVLS) and 551–579 (PFNQ…SNHF). Glycyl lysine isopeptide (Lys-Gly) (interchain with G-Cter in ubiquitin) cross-links involve residues K668 and K670. Residues S692, S694, and S706 each carry the phosphoserine modification. The segment at 773–815 (SLPKEREDDNDSTNSTIVPNHPDNDNYNDNDNDNNTGINSNNF) is disordered. The span at 805–815 (DNNTGINSNNF) shows a compositional bias: low complexity. S841 carries the post-translational modification Phosphoserine.

Interacts with ENV10/SND2.

The protein localises to the cytoplasm. In terms of biological role, functions in the SND pathway, a SRP (signal recognition particle) and GET (guided entry of tail-anchored proteins) independent pathway for targeting a broad range of substrate proteins to the endoplasmic reticulum. SND functions in parallel to GET in targeting proteins with downstream hydrophobic motifs. The sequence is that of SRP-independent targeting protein 1 from Saccharomyces cerevisiae (strain ATCC 204508 / S288c) (Baker's yeast).